A 179-amino-acid polypeptide reads, in one-letter code: ATP-dependent protease subunit HslV (179 aa).

Residue Thr7 is part of the active site. Gly162, Cys165, and Thr168 together coordinate Na(+).

It belongs to the peptidase T1B family. HslV subfamily. As to quaternary structure, a double ring-shaped homohexamer of HslV is capped on each side by a ring-shaped HslU homohexamer. The assembly of the HslU/HslV complex is dependent on binding of ATP.

Its subcellular location is the cytoplasm. It catalyses the reaction ATP-dependent cleavage of peptide bonds with broad specificity.. With respect to regulation, allosterically activated by HslU binding. Protease subunit of a proteasome-like degradation complex believed to be a general protein degrading machinery. In Bordetella pertussis (strain Tohama I / ATCC BAA-589 / NCTC 13251), this protein is ATP-dependent protease subunit HslV.